We begin with the raw amino-acid sequence, 1462 residues long: Iron-sulfur cluster assembly protein SufD (1462 aa).

Disordered stretches follow at residues I500–Y525, N938–Q970, and N1111–E1153. Residues N510–N523 show a composition bias toward low complexity. Positions H961–Q970 are enriched in basic and acidic residues. Over residues N1111–N1136 the composition is skewed to low complexity.

This sequence belongs to the iron-sulfur cluster assembly SufBD family. Component of a complex composed of SufB, SufC and SufD in a stoichiometric ratio of 1:2:1. Interacts with SufB. Interacts with SufC; the interaction enhances the ATPase activity of SufC. In terms of processing, proteolytically cleaved.

Its subcellular location is the plastid. The protein localises to the apicoplast. The protein operates within cofactor biosynthesis; iron-sulfur cluster biosynthesis. Its function is as follows. Participates in the sulfur mobilization (SUF) pathway for iron-sulfur (Fe-S) cluster biogenesis. As part of a complex consisting of SufB-SufC(2)-SufD, involved in assembly of [4Fe-4S] clusters. Enhances the ATPase activity of SufC. In Plasmodium falciparum (isolate 3D7), this protein is Iron-sulfur cluster assembly protein SufD.